We begin with the raw amino-acid sequence, 251 residues long: Transcriptional regulator CBF1 (251 aa).

The segment at 1–169 (MVKSHKRTLE…VERKRRESIN (169 aa)) is disordered. The segment covering 7-28 (RTLEKDEEHQEKKKANKISKDD) has biased composition (basic and acidic residues). Over residues 40–56 (ASDSAHTDTATAAVAAV) the composition is skewed to low complexity. Residues 67–76 (TESSTNQTSA) show a composition bias toward polar residues. A compositionally biased stretch (basic and acidic residues) spans 77-105 (LDKDDKETKDNLNPREETQSSHQEIDIPK). Residues 107–116 (QLTNQQNLAD) are compositionally biased toward polar residues. Low complexity predominate over residues 117 to 126 (QHQQYQYHQQ). Polar residues predominate over residues 127–140 (LAQTNFKTEPTNSA). Residues 144-167 (HGSEEWHRQRRENHKEVERKRRES) show a composition bias toward basic and acidic residues. The 49-residue stretch at 152 to 200 (QRRENHKEVERKRRESINTGIRELARLIPTTDTNKAQILQRAVEYIKRL) folds into the bHLH domain. Positions 190-223 (LQRAVEYIKRLKENENNNIEKWTLEKLLTEQAVS) form a coiled coil.

The protein resides in the nucleus. Transcription factor that binds ribosomal protein gene promoters and rDNA locus with TBF1. Necessary for the expression of genes involved in assimilation of inorganic sulfate. Also required for the expression of respiratory genes and glycolytic genes. Does not bind to centromeres and is not necessary for efficient chromosome segregationas as does S.cerevisiae CBF1. This is Transcriptional regulator CBF1 (CBF1) from Candida albicans (strain SC5314 / ATCC MYA-2876) (Yeast).